The chain runs to 92 residues: Small ribosomal subunit protein uS19 (92 aa).

The protein belongs to the universal ribosomal protein uS19 family.

Its function is as follows. Protein S19 forms a complex with S13 that binds strongly to the 16S ribosomal RNA. This chain is Small ribosomal subunit protein uS19, found in Chromobacterium violaceum (strain ATCC 12472 / DSM 30191 / JCM 1249 / CCUG 213 / NBRC 12614 / NCIMB 9131 / NCTC 9757 / MK).